We begin with the raw amino-acid sequence, 292 residues long: Bifunctional protein FolD (292 aa).

Residues 171–173 (GAS), Ile196, and Ile237 contribute to the NADP(+) site.

It belongs to the tetrahydrofolate dehydrogenase/cyclohydrolase family. As to quaternary structure, homodimer.

It carries out the reaction (6R)-5,10-methylene-5,6,7,8-tetrahydrofolate + NADP(+) = (6R)-5,10-methenyltetrahydrofolate + NADPH. The enzyme catalyses (6R)-5,10-methenyltetrahydrofolate + H2O = (6R)-10-formyltetrahydrofolate + H(+). Its pathway is one-carbon metabolism; tetrahydrofolate interconversion. Catalyzes the oxidation of 5,10-methylenetetrahydrofolate to 5,10-methenyltetrahydrofolate and then the hydrolysis of 5,10-methenyltetrahydrofolate to 10-formyltetrahydrofolate. This is Bifunctional protein FolD from Helicobacter acinonychis (strain Sheeba).